A 324-amino-acid chain; its full sequence is 1-deoxyxylulose-5-phosphate synthase YajO (324 aa).

The Proton donor role is filled by tyrosine 61.

It belongs to the aldo/keto reductase family. Aldo/keto reductase 2 subfamily.

The catalysed reaction is D-ribulose 5-phosphate + AH2 = 1-deoxy-D-xylulose 5-phosphate + A + H2O. With respect to regulation, NADH, NADPH or ATP do not increase activity. Its function is as follows. Catalyzes the conversion of ribulose 5-phosphate (Ru5P) to 1-deoxy-D-xylulose 5-phosphate (DXP), providing a direct route from pentoses to terpenes. May play a role in biosynthesis of DXP under conditions of thiamine starvation. This chain is 1-deoxyxylulose-5-phosphate synthase YajO (yajO), found in Escherichia coli (strain K12).